The chain runs to 401 residues: Beta-ketoadipyl-CoA thiolase (401 aa).

The active-site Acyl-thioester intermediate is Cys90. Active-site proton acceptor residues include His357 and Cys387.

This sequence belongs to the thiolase-like superfamily. Thiolase family.

It carries out the reaction succinyl-CoA + acetyl-CoA = 3-oxoadipyl-CoA + CoA. Its pathway is aromatic compound metabolism; phenylacetate degradation. Functionally, catalyzes thiolytic cleavage of beta-ketoadipyl-CoA to succinyl-CoA and acetyl-CoA. In Escherichia coli, this protein is Beta-ketoadipyl-CoA thiolase (paaJ).